We begin with the raw amino-acid sequence, 340 residues long: CMP-N-acetylneuraminate-beta-galactosamide-alpha-2,3-sialyltransferase 1 (340 aa).

Residues 1–13 (MVTLRKRTLKVLT) lie on the Cytoplasmic side of the membrane. A helical; Signal-anchor for type II membrane protein transmembrane segment spans residues 14 to 34 (FLVLFIFLTSFFLNYSHTMVA). Residues 35-340 (TTWFPKQMVL…INKIRIFKGR (306 aa)) lie on the Lumenal side of the membrane. Disulfide bonds link Cys59–Cys64, Cys61–Cys139, and Cys142–Cys281. N-linked (GlcNAc...) asparagine glycosylation is present at Asn79. Gln105 contributes to the substrate binding site. An N-linked (GlcNAc...) asparagine glycan is attached at Asn114. Asn147 and Asn170 together coordinate substrate. A glycan (N-linked (GlcNAc...) asparagine) is linked at Asn201. Substrate-binding residues include Tyr230, Tyr266, Gly270, Gly290, His299, and His316. Asn323 carries N-linked (GlcNAc...) asparagine glycosylation.

It belongs to the glycosyltransferase 29 family. In terms of processing, the soluble form derives from the membrane form by proteolytic processing.

The protein localises to the golgi apparatus. Its subcellular location is the golgi stack membrane. It localises to the trans-Golgi network membrane. It is found in the secreted. The enzyme catalyses a beta-D-galactosyl-(1-&gt;3)-N-acetyl-alpha-D-galactosaminyl derivative + CMP-N-acetyl-beta-neuraminate = an N-acetyl-alpha-neuraminyl-(2-&gt;3)-beta-D-galactosyl-(1-&gt;3)-N-acetyl-alpha-D-galactosaminyl derivative + CMP + H(+). It catalyses the reaction a ganglioside GM1 + CMP-N-acetyl-beta-neuraminate = a ganglioside GD1a + CMP + H(+). It carries out the reaction a ganglioside GM1 (d18:1(4E)) + CMP-N-acetyl-beta-neuraminate = a ganglioside GD1a (d18:1(4E)) + CMP + H(+). The catalysed reaction is ganglioside GM1 (d18:1(4E)/18:0) + CMP-N-acetyl-beta-neuraminate = ganglioside GD1a (18:1(4E)/18:0) + CMP + H(+). The enzyme catalyses a ganglioside GA1 + CMP-N-acetyl-beta-neuraminate = a ganglioside GM1b + CMP + H(+). It catalyses the reaction a ganglioside GA1 (d18:1(4E)) + CMP-N-acetyl-beta-neuraminate = a ganglioside GM1b (d18:1(4E)) + CMP + H(+). It carries out the reaction a ganglioside GD1b + CMP-N-acetyl-beta-neuraminate = a ganglioside GT1b + CMP + H(+). The catalysed reaction is a 3-O-[beta-D-galactosyl-(1-&gt;3)-N-acetyl-alpha-D-galactosaminyl]-L-threonyl-[protein] + CMP-N-acetyl-beta-neuraminate = a 3-O-[N-acetyl-alpha-neuraminyl-(2-&gt;3)-beta-D-galactosyl-(1-&gt;3)-N-acetyl-alpha-D-galactosaminyl]-L-threonyl-[protein] + CMP + H(+). The enzyme catalyses a 3-O-[beta-D-galactosyl-(1-&gt;3)-N-acetyl-alpha-D-galactosaminyl]-L-seryl-[protein] + CMP-N-acetyl-beta-neuraminate = 3-O-[N-acetyl-alpha-neuraminyl-(2-&gt;3)-beta-D-galactosyl-(1-&gt;3)-N-acetyl-alpha-D-galactosaminyl]-L-seryl-[protein] + CMP + H(+). Its pathway is protein modification; protein glycosylation. It functions in the pathway glycolipid biosynthesis. In terms of biological role, a beta-galactoside alpha2-&gt;3 sialyltransferase involved in terminal sialylation of glycoproteins and glycolipids. Catalyzes the transfer of sialic acid (N-acetyl-neuraminic acid; Neu5Ac) from the nucleotide sugar donor CMP-Neu5Ac onto acceptor Galbeta-(1-&gt;3)-GalNAc-terminated glycoconjugates through an alpha2-3 linkage. Adds sialic acid to the core 1 O-glycan, Galbeta-(1-&gt;3)-GalNAc-O-Ser/Thr, which is a major structure of mucin-type O-glycans. As part of a homeostatic mechanism that regulates CD8-positive T cell numbers, sialylates core 1 O-glycans of T cell glycoproteins, SPN/CD43 and PTPRC/CD45. Prevents premature apoptosis of thymic CD8-positive T cells prior to peripheral emigration, whereas in the secondary lymphoid organs controls the survival of CD8-positive memory T cells generated following a successful immune response. Transfers sialic acid to asialofetuin, presumably onto Galbeta-(1-&gt;3)-GalNAc-O-Ser. Sialylates GM1a, GA1 and GD1b gangliosides to form GD1a, GM1b and GT1b, respectively. The protein is CMP-N-acetylneuraminate-beta-galactosamide-alpha-2,3-sialyltransferase 1 (ST3GAL1) of Pan troglodytes (Chimpanzee).